Consider the following 264-residue polypeptide: Carbohydrate deacetylase (264 aa).

D20 acts as the Proton acceptor in catalysis. D21, H60, and H127 together coordinate Mg(2+). H215 acts as the Proton donor in catalysis.

Belongs to the YdjC deacetylase family. In terms of assembly, homodimer. Mg(2+) serves as cofactor.

Its function is as follows. Probably catalyzes the deacetylation of acetylated carbohydrates an important step in the degradation of oligosaccharides. In Thermus thermophilus (strain ATCC 27634 / DSM 579 / HB8), this protein is Carbohydrate deacetylase.